The primary structure comprises 178 residues: RNA pyrophosphohydrolase (178 aa).

The Nudix hydrolase domain maps to 18-171 (PYRPCVGLMV…KRKVYEQVVA (154 aa)). A Nudix box motif is present at residues 59-80 (GGIDKGEDPAQAALRELYEETG).

The protein belongs to the Nudix hydrolase family. RppH subfamily. A divalent metal cation is required as a cofactor.

Its function is as follows. Accelerates the degradation of transcripts by removing pyrophosphate from the 5'-end of triphosphorylated RNA, leading to a more labile monophosphorylated state that can stimulate subsequent ribonuclease cleavage. This is RNA pyrophosphohydrolase from Brucella canis (strain ATCC 23365 / NCTC 10854 / RM-666).